A 292-amino-acid chain; its full sequence is Shikimate dehydrogenase (NADP(+)) (292 aa).

Residues 22-24 and Ser-69 each bind shikimate; that span reads SLS. Lys-73 serves as the catalytic Proton acceptor. Asn-94 and Asp-111 together coordinate shikimate. NADP(+) is bound by residues 135–139 and Ile-236; that span reads GVGGA. Position 238 (Tyr-238) interacts with shikimate. Position 260 (Gly-260) interacts with NADP(+).

This sequence belongs to the shikimate dehydrogenase family. As to quaternary structure, homodimer.

The enzyme catalyses shikimate + NADP(+) = 3-dehydroshikimate + NADPH + H(+). It participates in metabolic intermediate biosynthesis; chorismate biosynthesis; chorismate from D-erythrose 4-phosphate and phosphoenolpyruvate: step 4/7. Involved in the biosynthesis of the chorismate, which leads to the biosynthesis of aromatic amino acids. Catalyzes the reversible NADPH linked reduction of 3-dehydroshikimate (DHSA) to yield shikimate (SA). The polypeptide is Shikimate dehydrogenase (NADP(+)) (Streptococcus pyogenes serotype M18 (strain MGAS8232)).